The chain runs to 516 residues: Acetylcholine receptor subunit alpha-like (516 aa).

The signal sequence occupies residues 1 to 21; the sequence is MRSVTKYYLHGVVLFATGCAG. Over 22 to 243 the chain is Extracellular; the sequence is NPDAKRLYDD…ITMRRKTLFY (222 aa). Asn45 and Asn132 each carry an N-linked (GlcNAc...) asparagine glycan. 2 disulfides stabilise this stretch: Cys149-Cys163 and Cys222-Cys223. Asn233 carries an N-linked (GlcNAc...) asparagine glycan. 3 helical membrane-spanning segments follow: residues 244–264, 274–294, and 306–326; these read TVNLIIPCMGISFLTVLVFYL, LSISILLSLTVFFLLLAEIIP, and FVLFTMILDTFSICVTVVVLN. The Cytoplasmic portion of the chain corresponds to 327–465; it reads VHFRSPQTHT…WKYVAMVLDR (139 aa). The chain crosses the membrane as a helical span at residues 466–486; it reads PFLWIFTLAVVVGSAGIILQA.

This sequence belongs to the ligand-gated ion channel (TC 1.A.9) family. Acetylcholine receptor (TC 1.A.9.1) subfamily.

The protein localises to the postsynaptic cell membrane. The protein resides in the cell membrane. Its function is as follows. After binding acetylcholine, the AChR responds by an extensive change in conformation that affects all subunits and leads to opening of an ion-conducting channel across the plasma membrane. This chain is Acetylcholine receptor subunit alpha-like (ARA1), found in Manduca sexta (Tobacco hawkmoth).